We begin with the raw amino-acid sequence, 382 residues long: Sulfate adenylyltransferase (382 aa).

Belongs to the sulfate adenylyltransferase family.

It catalyses the reaction sulfate + ATP + H(+) = adenosine 5'-phosphosulfate + diphosphate. The protein operates within sulfur metabolism; hydrogen sulfide biosynthesis; sulfite from sulfate: step 1/3. The chain is Sulfate adenylyltransferase from Staphylothermus marinus (strain ATCC 43588 / DSM 3639 / JCM 9404 / F1).